A 327-amino-acid polypeptide reads, in one-letter code: Putative HTH-type transcriptional regulatory protein Mbar_A2318 (327 aa).

The 59-residue stretch at 132-190 (LKKARMGQSMSLGTLASMVGVSRRTISKYEEEGMDASIDVVLQLEDIFGVELAKPINIL) folds into the HTH cro/C1-type domain. Residues 143 to 162 (LGTLASMVGVSRRTISKYEE) constitute a DNA-binding region (H-T-H motif).

The polypeptide is Putative HTH-type transcriptional regulatory protein Mbar_A2318 (Methanosarcina barkeri (strain Fusaro / DSM 804)).